Reading from the N-terminus, the 395-residue chain is Thyroid hormone receptor beta (395 aa).

A modulating region spans residues 1–31; the sequence is MSEQADKCNSRWKDEAMQNGYIPSYLDKDEL. Positions 29 to 106 form a DNA-binding region, nuclear receptor; that stretch reads DELCVVCGDK…VGMATDLVLD (78 aa). Zn(2+) contacts are provided by Cys32, Cys35, Cys49, Cys52, Cys70, Cys76, Cys86, and Cys89. NR C4-type zinc fingers lie at residues 32–52 and 70–89; these read CVVCGDKATGYHYRCITCEGC and CKYEGKCVIDKVTRNQCQEC. The NR LBD domain occupies 142 to 395; that stretch reads EEWEMIRVVT…PPLFLEVFED (254 aa). 3,3',5-triiodo-L-thyronine is bound by residues Arg216, Asn265, and His369.

This sequence belongs to the nuclear hormone receptor family. NR1 subfamily. In terms of assembly, interacts (via the ligand-binding domain) with ncoa2. Widely expressed in a range of adult tissues including the brain, eye, fin, gill, intestine, liver, swim bladder and ovary. In the eye, expressed in the outer nuclear layer of the retina.

The protein localises to the nucleus. Functionally, nuclear hormone receptor that can act as a repressor or activator of transcription. High affinity receptor for the thyroid gland hormone triiodothyronine (T3). Transactivating activity is ligand-dependent, and is repressed in the absence of T3. In Danio rerio (Zebrafish), this protein is Thyroid hormone receptor beta (thrb).